The primary structure comprises 983 residues: Importin beta-like protein kap113 (983 aa).

The region spanning alanine 24–lysine 96 is the Importin N-terminal domain.

It belongs to the importin beta family.

The protein resides in the nucleus. Functionally, functions as a component of the nuclear pore complex (NPC). NPC components, collectively referred to as nucleoporins (NUPs), can play the role of both NPC structural components and of docking or interaction partners for transiently associated nuclear transport factors. Active directional transport is assured by both, a Phe-Gly (FG) repeat affinity gradient for these transport factors across the NPC and a transport cofactor concentration gradient across the nuclear envelope. Involved in the export of mRNA from the nucleus to the cytoplasm. May play a role in mitotic spindle formation and/or function. This Schizosaccharomyces pombe (strain 972 / ATCC 24843) (Fission yeast) protein is Importin beta-like protein kap113 (kap113).